A 538-amino-acid polypeptide reads, in one-letter code: Zinc finger protein 155 (538 aa).

A KRAB domain is found at 8–78 (VTFKDVAVVF…GTATQREGNS (71 aa)). C2H2-type zinc fingers lie at residues 176-198 (YTCDECGKSICYISALHVHQRVH), 204-226 (FMCDVCGKEFSQSSHLQTHQRVH), 232-254 (FKCEQCGKGFSRRSALNVHRKLH), 260-282 (YICEACGKAFIHDSQLKEHKRIH), 288-310 (FKCDICGKTFYFRSRLKSHSMVH), 316-338 (FRCDTCDKSFHQRSALNRHCMVH), 344-366 (YRCEQCGKGFIGRLDFYKHQVVH), 372-394 (YNCKECGKSFRWSSCLLNHQRVH), 400-422 (FKCEECGKGFYTNSQLSSHQRSH), 428-450 (YKCEECGKGYVTKFNLDLHQRVH), and 456-478 (YNCKECGKNFSRASSILNHKRLH). The C2H2-type 12; degenerate zinc-finger motif lies at 484–506 (FKCEDCGKRLVHRTYRKDQPRDY).

It belongs to the krueppel C2H2-type zinc-finger protein family.

The protein localises to the nucleus. Functionally, may be involved in transcriptional regulation. In Homo sapiens (Human), this protein is Zinc finger protein 155 (ZNF155).